Consider the following 492-residue polypeptide: Bifunctional protein GlmU (492 aa).

The interval 1–241 is pyrophosphorylase; that stretch reads MTFRGDTAVV…SALVAGVNDR (241 aa). UDP-N-acetyl-alpha-D-glucosamine is bound by residues 12–15, Lys-26, Gln-83, and 88–89; these read LAAG and GT. Asp-114 contacts Mg(2+). Residues Gly-151, Glu-166, Asn-181, and Asn-239 each contribute to the UDP-N-acetyl-alpha-D-glucosamine site. Asn-239 contributes to the Mg(2+) binding site. Positions 242 to 262 are linker; sequence VQLAQLGAELNRRIVAAHQMA. Positions 263–492 are N-acetyltransferase; it reads GVTVIDPATT…TPPPDADHPP (230 aa). UDP-N-acetyl-alpha-D-glucosamine-binding residues include Arg-344 and Lys-362. His-374 (proton acceptor) is an active-site residue. UDP-N-acetyl-alpha-D-glucosamine contacts are provided by Tyr-377 and Asn-388. Acetyl-CoA is bound by residues Ala-391, 397–398, and Ala-434; that span reads NY. Residues 443–492 are disordered; that stretch reads PPGALAVSGGPQRNIEDWVQQKRPGTPSAEAARKASAEQSTPPPDADHPP.

The protein in the N-terminal section; belongs to the N-acetylglucosamine-1-phosphate uridyltransferase family. This sequence in the C-terminal section; belongs to the transferase hexapeptide repeat family. Homotrimer. It depends on Mg(2+) as a cofactor.

The protein localises to the cytoplasm. The enzyme catalyses alpha-D-glucosamine 1-phosphate + acetyl-CoA = N-acetyl-alpha-D-glucosamine 1-phosphate + CoA + H(+). It catalyses the reaction N-acetyl-alpha-D-glucosamine 1-phosphate + UTP + H(+) = UDP-N-acetyl-alpha-D-glucosamine + diphosphate. It participates in nucleotide-sugar biosynthesis; UDP-N-acetyl-alpha-D-glucosamine biosynthesis; N-acetyl-alpha-D-glucosamine 1-phosphate from alpha-D-glucosamine 6-phosphate (route II): step 2/2. It functions in the pathway nucleotide-sugar biosynthesis; UDP-N-acetyl-alpha-D-glucosamine biosynthesis; UDP-N-acetyl-alpha-D-glucosamine from N-acetyl-alpha-D-glucosamine 1-phosphate: step 1/1. Its pathway is bacterial outer membrane biogenesis; LPS lipid A biosynthesis. Functionally, catalyzes the last two sequential reactions in the de novo biosynthetic pathway for UDP-N-acetylglucosamine (UDP-GlcNAc). The C-terminal domain catalyzes the transfer of acetyl group from acetyl coenzyme A to glucosamine-1-phosphate (GlcN-1-P) to produce N-acetylglucosamine-1-phosphate (GlcNAc-1-P), which is converted into UDP-GlcNAc by the transfer of uridine 5-monophosphate (from uridine 5-triphosphate), a reaction catalyzed by the N-terminal domain. In Mycobacterium ulcerans (strain Agy99), this protein is Bifunctional protein GlmU.